Consider the following 253-residue polypeptide: 5-oxoprolinase subunit A (253 aa).

This sequence belongs to the LamB/PxpA family. Forms a complex composed of PxpA, PxpB and PxpC.

It catalyses the reaction 5-oxo-L-proline + ATP + 2 H2O = L-glutamate + ADP + phosphate + H(+). Its function is as follows. Catalyzes the cleavage of 5-oxoproline to form L-glutamate coupled to the hydrolysis of ATP to ADP and inorganic phosphate. The protein is 5-oxoprolinase subunit A of Syntrophobacter fumaroxidans (strain DSM 10017 / MPOB).